The sequence spans 146 residues: MAALARIGGRHLKSVCLINSSASCFFTQRRGVASKLFIGGLSFCTTEQGLSEAFSKCGQVVEAQIVMDRVSDRSKGFGFVTFASADEAQKALMEFNGQQLNGRTIFVDYAKAKQSLGGGGGYPIARGPPDPAVIAATRTTETSKSD.

A chloroplast-targeting transit peptide spans 1–31; that stretch reads MAALARIGGRHLKSVCLINSSASCFFTQRRG. The RRM domain occupies 34–112; sequence SKLFIGGLSF…RTIFVDYAKA (79 aa). Ser-42 is subject to Phosphoserine.

As to expression, expressed in rosette leaves, cauline leaves, stems and flowers.

The protein localises to the plastid. It is found in the chloroplast. Functionally, probable RNA-binding protein that may be involved in salt and oxidative stress tolerance. The chain is Small RNA-binding protein 11, chloroplastic from Arabidopsis thaliana (Mouse-ear cress).